A 415-amino-acid polypeptide reads, in one-letter code: Gamma-glutamyl phosphate reductase (415 aa).

The protein belongs to the gamma-glutamyl phosphate reductase family.

It is found in the cytoplasm. It carries out the reaction L-glutamate 5-semialdehyde + phosphate + NADP(+) = L-glutamyl 5-phosphate + NADPH + H(+). It participates in amino-acid biosynthesis; L-proline biosynthesis; L-glutamate 5-semialdehyde from L-glutamate: step 2/2. Catalyzes the NADPH-dependent reduction of L-glutamate 5-phosphate into L-glutamate 5-semialdehyde and phosphate. The product spontaneously undergoes cyclization to form 1-pyrroline-5-carboxylate. The protein is Gamma-glutamyl phosphate reductase of Shouchella clausii (strain KSM-K16) (Alkalihalobacillus clausii).